Reading from the N-terminus, the 23-residue chain is Paralytic peptide 2 (23 aa).

Cysteine 7 and cysteine 19 are oxidised to a cystine.

It belongs to the GBP/PSP1/paralytic peptide family. In terms of tissue distribution, hemolymph.

In terms of biological role, causes rapid, rigid paralysis when injected into Lepidopteran larvae. The physiological role may be to reduce hemolymph loss following injury and promote wound healing. The protein is Paralytic peptide 2 of Manduca sexta (Tobacco hawkmoth).